Here is a 326-residue protein sequence, read N- to C-terminus: Vitamin B12 import system permease protein BtuC (326 aa).

9 helical membrane-spanning segments follow: residues isoleucine 13–glutamate 35, isoleucine 55–methionine 77, leucine 90–leucine 107, glutamine 111–leucine 133, leucine 146–threonine 168, tryptophan 188–cysteine 205, methionine 242–leucine 264, valine 274–leucine 296, and leucine 303–leucine 322.

The protein belongs to the binding-protein-dependent transport system permease family. FecCD subfamily. As to quaternary structure, the complex is composed of two ATP-binding proteins (BtuD), two transmembrane proteins (BtuC) and a solute-binding protein (BtuF).

The protein resides in the cell inner membrane. Part of the ABC transporter complex BtuCDF involved in vitamin B12 import. Involved in the translocation of the substrate across the membrane. The polypeptide is Vitamin B12 import system permease protein BtuC (Shigella flexneri).